A 394-amino-acid polypeptide reads, in one-letter code: Multidrug resistance protein D (394 aa).

Residues M1 to N8 lie on the Cytoplasmic side of the membrane. A helical transmembrane segment spans residues L9–P29. Topologically, residues A30–Q46 are periplasmic. Residues S47 to S67 traverse the membrane as a helical segment. Residues D68–R73 lie on the Cytoplasmic side of the membrane. The helical transmembrane segment at P74 to S94 threads the bilayer. S95 is a topological domain (periplasmic). Residues L96 to M116 traverse the membrane as a helical segment. Residues A117–N134 lie on the Cytoplasmic side of the membrane. The helical transmembrane segment at S135 to L155 threads the bilayer. At D156–R162 the chain is on the periplasmic side. The helical transmembrane segment at A163–M183 threads the bilayer. Residues P184–Y212 lie on the Cytoplasmic side of the membrane. The helical transmembrane segment at L213–L233 threads the bilayer. The Periplasmic portion of the chain corresponds to M234 to S242. A helical transmembrane segment spans residues M243–A263. Residues G264–Q276 are Cytoplasmic-facing. The chain crosses the membrane as a helical span at residues S277–M297. Residue N298 is a topological domain, periplasmic. Residues V299–L319 form a helical membrane-spanning segment. The Cytoplasmic portion of the chain corresponds to A320–P329. Residues F330–L350 traverse the membrane as a helical segment. The Periplasmic portion of the chain corresponds to A351–S364. A helical transmembrane segment spans residues L365–T385. Topologically, residues R386 to V394 are cytoplasmic.

It belongs to the major facilitator superfamily.

Its subcellular location is the cell inner membrane. Its function is as follows. Multidrug resistance pump that participates in a low energy shock adaptive response. The protein is Multidrug resistance protein D (emrD) of Escherichia coli (strain K12).